Reading from the N-terminus, the 329-residue chain is Flotillin-like protein FloA (329 aa).

2 helical membrane-spanning segments follow: residues I4–V24 and V26–G46.

Belongs to the flotillin-like FloA family. In terms of assembly, homooligomerizes.

The protein resides in the cell membrane. Its subcellular location is the membrane raft. Found in functional membrane microdomains (FMM) that may be equivalent to eukaryotic membrane rafts. FMMs are highly dynamic and increase in number as cells age. Flotillins are thought to be important factors in membrane fluidity. The protein is Flotillin-like protein FloA of Staphylococcus epidermidis (strain ATCC 35984 / DSM 28319 / BCRC 17069 / CCUG 31568 / BM 3577 / RP62A).